The primary structure comprises 792 residues: Probable G-protein coupled receptor 156 (792 aa).

Residues 1–49 (MEPEINCSEFCDSFPGQELDRRPLHDLCKTTITDSQHGSADISPLSPAL) lie on the Extracellular side of the membrane. The N-linked (GlcNAc...) asparagine glycan is linked to Asn6. The chain crosses the membrane as a helical span at residues 50–70 (LGVIWTFLSCGLLLVLFFLAF). The Cytoplasmic portion of the chain corresponds to 71–86 (TIRCRKNRIVKMSSPN). Residues 87-107 (LNIVTLLGSCLTYSSAYLFGI) traverse the membrane as a helical segment. Over 108 to 118 (QDALVGSSVEA) the chain is Extracellular. Residues 119–139 (LIQTRLSLLCIGTTLVFGPIL) traverse the membrane as a helical segment. Topologically, residues 140 to 164 (GKSWRLYKVFTQRVPDKRVIIKDLQ) are cytoplasmic. The chain crosses the membrane as a helical span at residues 165-185 (LLGLVAALVVADVILLVTWVL). The Extracellular portion of the chain corresponds to 186 to 222 (TDPIQCLQILGVSMKVTGRDVSCSLTNTHFCASRYSD). Residues 223–243 (VWIALVLGCKGLLLLYGAYLA) traverse the membrane as a helical segment. Over 244–257 (GLTNHVSSPPVNQS) the chain is Cytoplasmic. A helical membrane pass occupies residues 258-278 (LTIMVGVNLLLLTAGLLFVVT). Residues 279–287 (RYLHSWPNL) are Extracellular-facing. A helical membrane pass occupies residues 288 to 308 (VFGLTSGGIFVCTTTVNCCVF). Topologically, residues 309-792 (LPQLRQRKAF…FKDDLKPTLV (484 aa)) are cytoplasmic. A coiled-coil region spans residues 354-390 (EXSCMERLLTEKNAVIESLQEQVSNAKEKLVKLMSAE). 3 disordered regions span residues 407-457 (GGPA…KYDM), 469-516 (GCSQ…EVLP), and 538-704 (DLGT…QRQP). The segment covering 422 to 434 (AAAEDSLPASAAS) has biased composition (low complexity). 2 stretches are compositionally biased toward basic and acidic residues: residues 443-457 (SRRDXSPSPDQKYDM) and 474-486 (PKAEQSEGPERGN). Residues 554 to 567 (PWKSNTSGSPQKLS) show a composition bias toward polar residues. Residues 578–589 (VRRRRAAQRARS) are compositionally biased toward basic residues. Positions 602-619 (QANNTVSGSQNGLIVQNR) are enriched in polar residues. The span at 620–635 (DSPRLDHHNARSKEPR) shows a compositional bias: basic and acidic residues. Residues 675 to 704 (PRQPSASAPAQSSTAPCLSSXPALPRQRQP) show a composition bias toward low complexity.

The protein belongs to the G-protein coupled receptor 3 family. GABA-B receptor subfamily. As to expression, widely expressed throughout the brain and is particularly dense in the olfactory tubercles, islands of Calleja, nucleus accumbens, piriform cortex and all fields of the hippocampus.

It is found in the cell membrane. Its function is as follows. Orphan G-protein coupled receptor involved in the regulation of hair cell orientation in mechanosensory organs of the inner ear. It is required to trigger a 180 degree reversal in hair cell orientation, creating a virtual line of polarity reversal (LPR) across which stereociliary bundles are arranged in opposite orientations. The polypeptide is Probable G-protein coupled receptor 156 (Gpr156) (Rattus norvegicus (Rat)).